The sequence spans 418 residues: L-rhamnose isomerase (418 aa).

Mn(2+) contacts are provided by H262, D294, and D296.

It belongs to the rhamnose isomerase family. In terms of assembly, homotetramer. Requires Mn(2+) as cofactor.

The protein resides in the cytoplasm. The enzyme catalyses L-rhamnopyranose = L-rhamnulose. The protein operates within carbohydrate degradation; L-rhamnose degradation; glycerone phosphate from L-rhamnose: step 1/3. Catalyzes the interconversion of L-rhamnose and L-rhamnulose. This chain is L-rhamnose isomerase, found in Cronobacter sakazakii (strain ATCC BAA-894) (Enterobacter sakazakii).